Reading from the N-terminus, the 555-residue chain is Dihydroxy-acid dehydratase (555 aa).

Asp78 contacts Mg(2+). Residue Cys119 participates in [2Fe-2S] cluster binding. The Mg(2+) site is built by Asp120 and Lys121. At Lys121 the chain carries N6-carboxylysine. Cys191 lines the [2Fe-2S] cluster pocket. Residue Glu444 coordinates Mg(2+). Catalysis depends on Ser470, which acts as the Proton acceptor.

Belongs to the IlvD/Edd family. In terms of assembly, homodimer. Requires [2Fe-2S] cluster as cofactor. The cofactor is Mg(2+).

It catalyses the reaction (2R)-2,3-dihydroxy-3-methylbutanoate = 3-methyl-2-oxobutanoate + H2O. It carries out the reaction (2R,3R)-2,3-dihydroxy-3-methylpentanoate = (S)-3-methyl-2-oxopentanoate + H2O. It functions in the pathway amino-acid biosynthesis; L-isoleucine biosynthesis; L-isoleucine from 2-oxobutanoate: step 3/4. It participates in amino-acid biosynthesis; L-valine biosynthesis; L-valine from pyruvate: step 3/4. Its function is as follows. Functions in the biosynthesis of branched-chain amino acids. Catalyzes the dehydration of (2R,3R)-2,3-dihydroxy-3-methylpentanoate (2,3-dihydroxy-3-methylvalerate) into 2-oxo-3-methylpentanoate (2-oxo-3-methylvalerate) and of (2R)-2,3-dihydroxy-3-methylbutanoate (2,3-dihydroxyisovalerate) into 2-oxo-3-methylbutanoate (2-oxoisovalerate), the penultimate precursor to L-isoleucine and L-valine, respectively. The protein is Dihydroxy-acid dehydratase of Oleidesulfovibrio alaskensis (strain ATCC BAA-1058 / DSM 17464 / G20) (Desulfovibrio alaskensis).